The sequence spans 144 residues: Large ribosomal subunit protein uL15 (144 aa).

Positions 1-57 (MFLNTLRPGEGSKHAPKRVGRGIGSGLGKTGGRGHKGLKSRSGGSVKPGFEGGQMPL) are disordered. A compositionally biased stretch (gly residues) spans 21 to 31 (RGIGSGLGKTG).

It belongs to the universal ribosomal protein uL15 family. In terms of assembly, part of the 50S ribosomal subunit.

Functionally, binds to the 23S rRNA. The protein is Large ribosomal subunit protein uL15 of Marinomonas sp. (strain MWYL1).